Here is a 168-residue protein sequence, read N- to C-terminus: Mediator of RNA polymerase II transcription subunit 31 (168 aa).

Over residues 113–159 (EGEDQDVEESEEETVENEQKESEDEEDVVIVEKPEDEQEEQAEEAAE) the composition is skewed to acidic residues. Residues 113–168 (EGEDQDVEESEEETVENEQKESEDEEDVVIVEKPEDEQEEQAEEAAEPTDTSLLNT) are disordered.

Belongs to the Mediator complex subunit 31 family. Component of the Mediator complex.

It is found in the nucleus. In terms of biological role, component of the Mediator complex, a coactivator involved in the regulated transcription of nearly all RNA polymerase II-dependent genes. Mediator functions as a bridge to convey information from gene-specific regulatory proteins to the basal RNA polymerase II transcription machinery. Mediator is recruited to promoters by direct interactions with regulatory proteins and serves as a scaffold for the assembly of a functional preinitiation complex with RNA polymerase II and the general transcription factors. The sequence is that of Mediator of RNA polymerase II transcription subunit 31 (mdt-31) from Caenorhabditis briggsae.